The sequence spans 467 residues: Gamma-aminobutyric acid receptor subunit gamma-3 (467 aa).

Positions 1-17 (MAAKLLLLLCLFSGLHA) are cleaved as a signal peptide. Residues 18–256 (RSRRVEEDDS…FELSRRMGYF (239 aa)) lie on the Extracellular side of the membrane. The N-linked (GlcNAc...) asparagine glycan is linked to Asn-110. Cys-171 and Cys-185 are joined by a disulfide. Asn-228 carries an N-linked (GlcNAc...) asparagine glycan. Residues 257 to 277 (TIQTYIPCILTVVLSWVSFWI) traverse the membrane as a helical segment. The Cytoplasmic segment spans residues 278-283 (KKDATP). The chain crosses the membrane as a helical span at residues 284 to 303 (ARTTLGITTVLTMTTLSTIA). The Extracellular portion of the chain corresponds to 304–311 (RKSLPRVS). Residues 312-332 (YVTAMDLFVTVCFLFVFAALM) form a helical membrane-spanning segment. Residues 333–446 (EYATLNYYSS…DVSELDSYSR (114 aa)) lie on the Cytoplasmic side of the membrane. The helical transmembrane segment at 447 to 467 (VFFPTSFLLFNLVYWVGYLYL) threads the bilayer.

Belongs to the ligand-gated ion channel (TC 1.A.9) family. Gamma-aminobutyric acid receptor (TC 1.A.9.5) subfamily. GABRG3 sub-subfamily. As to quaternary structure, heteropentamer, formed by a combination of alpha (GABRA1-6), beta (GABRB1-3), gamma (GABRG1-3), delta (GABRD), epsilon (GABRE), rho (GABRR1-3), pi (GABRP) and theta (GABRQ) chains, each subunit exhibiting distinct physiological and pharmacological properties. In terms of processing, may be palmitoylated. As to expression, expressed in brain.

It is found in the postsynaptic cell membrane. It localises to the cell membrane. It catalyses the reaction chloride(in) = chloride(out). Its activity is regulated as follows. Allosterically potentiated by alphaxalone. Allosterically inhibited by pregnenolone sulfate. Inhibited by zinc and lanthanum. In terms of biological role, gamma subunit of the heteropentameric ligand-gated chloride channel gated by gamma-aminobutyric acid (GABA), a major inhibitory neurotransmitter in the brain. GABA-gated chloride channels, also named GABA(A) receptors (GABAAR), consist of five subunits arranged around a central pore and contain GABA active binding site(s) located at the alpha and beta subunit interface(s). When activated by GABA, GABAARs selectively allow the flow of chloride across the cell membrane down their electrochemical gradient. This Rattus norvegicus (Rat) protein is Gamma-aminobutyric acid receptor subunit gamma-3.